Here is a 105-residue protein sequence, read N- to C-terminus: Class II hydrophobin 1 (105 aa).

Residues 1–15 form the signal peptide; sequence MQVLLIATLVASVLA. 4 cysteine pairs are disulfide-bonded: cysteine 38–cysteine 87, cysteine 48–cysteine 78, cysteine 49–cysteine 58, and cysteine 88–cysteine 99.

Belongs to the cerato-ulmin hydrophobin family. In terms of assembly, homotetramer. Further self-assembles to form highly ordered films at water-air interfaces through intermolecular interactions.

It localises to the secreted. Its subcellular location is the cell wall. Functionally, aerial growth, conidiation, and dispersal of filamentous fungi in the environment rely upon a capability of their secreting small amphipathic proteins called hydrophobins (HPBs) with low sequence identity. Class I can self-assemble into an outermost layer of rodlet bundles on aerial cell surfaces, conferring cellular hydrophobicity that supports fungal growth, development and dispersal; whereas Class II form highly ordered films at water-air interfaces through intermolecular interactions but contribute nothing to the rodlet structure. HYD1 is a class II hydrophobin that plays roles in conidiation and cuticle-bypassing infection by regulating the transcripts of frequency clock protein frq, and velvet protein vosA, as well as primordium formation via the mitogen-activated protein kinase signaling pathway. Also participates in stress response, including tolerance of mycelia to osmotic and oxidative stresses, and conidia to high or low temperature. Acts as a defensive factor against Calcarisporium cordycipiticola infection, probably via the formation of a physical barrier to inhibit the pathogen infection owing to its hydrophobicity or binding to the effector of C.cordycipiticola, hindering the recognition of the pathogen. Finally, regulates the transcription of the AreA transcription factor at different developmental stages via a positive feedback loop. The sequence is that of Class II hydrophobin 1 from Cordyceps militaris (Caterpillar fungus).